Consider the following 147-residue polypeptide: Hemoglobin subunit epsilon (147 aa).

The region spanning His-3 to His-147 is the Globin domain. 2 positions are modified to phosphoserine: Ser-14 and Ser-51. Heme b contacts are provided by His-64 and His-93.

Belongs to the globin family. Heterotetramer of two alpha chains and two epsilon chains in early embryonic hemoglobin Gower-2; two zeta chains and two epsilon chains in early embryonic hemoglobin Gower-1. Red blood cells.

The epsilon chain is a beta-type chain of early mammalian embryonic hemoglobin. In Cebus kaapori (Ka'apor capuchin), this protein is Hemoglobin subunit epsilon (HBE1).